The primary structure comprises 223 residues: UPF0641 membrane protein PJ4664.05 (223 aa).

Transmembrane regions (helical) follow at residues Phe10–Ile30, Leu49–Ile69, Ile81–Val101, Leu146–Val166, and Thr190–Val210.

The protein belongs to the UPF0641 family.

The protein resides in the endoplasmic reticulum membrane. This Schizosaccharomyces pombe (strain 972 / ATCC 24843) (Fission yeast) protein is UPF0641 membrane protein PJ4664.05.